Reading from the N-terminus, the 457-residue chain is MYNCAIILAAGKGKRMKSSMPKVVHKVCGKEMVNHVIDNVRKANIKDVNLVIGKGSETVKEHTKDRNVTYSMQEEQLGTGHAVICAEEFLKDKKGTVAIFTGDAPLITNETIQQLFEFHNSGKYAATLISSTVQDPTGYGRIIREASGEVKKIVEHKDCNEEELKVNEINSGMYCFDIEVLLNSLKNLNNDNSQGEYYLTDVIEITKKSGDKVGAIVVPYEEIMGVNSRVQLSEAEIVMRKRINHKHMVNGVTFIDCESTYIDVDVEIGNDTIIYPGCVIQGNTRIKEECTLYSNSRICNSVIGSGVIVENSVILESHVGEGTTVGPFAYIRPETKIGKSARIGDFVEIKKSTIGDNTKVSHLTYIGDAEVGSKCNFGCGTVVVNYDGQKKQKTIIGNNAFIGCNTNLISPVKVNDNTYIAAGSTITKEVPEGSLAIARSKQINKEGWLDKKGLLKK.

Residues 1 to 229 (MYNCAIILAA…YEEIMGVNSR (229 aa)) are pyrophosphorylase. Residues 8–11 (LAAG), lysine 22, glutamine 73, and 78–79 (GT) each bind UDP-N-acetyl-alpha-D-glucosamine. Aspartate 103 provides a ligand contact to Mg(2+). Positions 140, 155, 170, and 227 each coordinate UDP-N-acetyl-alpha-D-glucosamine. Position 227 (asparagine 227) interacts with Mg(2+). Positions 230–250 (VQLSEAEIVMRKRINHKHMVN) are linker. The tract at residues 251 to 457 (GVTFIDCEST…WLDKKGLLKK (207 aa)) is N-acetyltransferase. UDP-N-acetyl-alpha-D-glucosamine contacts are provided by arginine 332 and lysine 350. The active-site Proton acceptor is the histidine 362. Positions 365 and 376 each coordinate UDP-N-acetyl-alpha-D-glucosamine. Acetyl-CoA is bound by residues 385–386 (NY), alanine 422, and arginine 439.

In the N-terminal section; belongs to the N-acetylglucosamine-1-phosphate uridyltransferase family. The protein in the C-terminal section; belongs to the transferase hexapeptide repeat family. As to quaternary structure, homotrimer. It depends on Mg(2+) as a cofactor.

It is found in the cytoplasm. It catalyses the reaction alpha-D-glucosamine 1-phosphate + acetyl-CoA = N-acetyl-alpha-D-glucosamine 1-phosphate + CoA + H(+). It carries out the reaction N-acetyl-alpha-D-glucosamine 1-phosphate + UTP + H(+) = UDP-N-acetyl-alpha-D-glucosamine + diphosphate. The protein operates within nucleotide-sugar biosynthesis; UDP-N-acetyl-alpha-D-glucosamine biosynthesis; N-acetyl-alpha-D-glucosamine 1-phosphate from alpha-D-glucosamine 6-phosphate (route II): step 2/2. Its pathway is nucleotide-sugar biosynthesis; UDP-N-acetyl-alpha-D-glucosamine biosynthesis; UDP-N-acetyl-alpha-D-glucosamine from N-acetyl-alpha-D-glucosamine 1-phosphate: step 1/1. It functions in the pathway bacterial outer membrane biogenesis; LPS lipid A biosynthesis. Functionally, catalyzes the last two sequential reactions in the de novo biosynthetic pathway for UDP-N-acetylglucosamine (UDP-GlcNAc). The C-terminal domain catalyzes the transfer of acetyl group from acetyl coenzyme A to glucosamine-1-phosphate (GlcN-1-P) to produce N-acetylglucosamine-1-phosphate (GlcNAc-1-P), which is converted into UDP-GlcNAc by the transfer of uridine 5-monophosphate (from uridine 5-triphosphate), a reaction catalyzed by the N-terminal domain. The sequence is that of Bifunctional protein GlmU from Clostridium botulinum (strain ATCC 19397 / Type A).